A 306-amino-acid polypeptide reads, in one-letter code: Bifunctional protein FolD 2 (306 aa).

NADP(+) is bound by residues 169-171 and I235; that span reads GHS.

The protein belongs to the tetrahydrofolate dehydrogenase/cyclohydrolase family. As to quaternary structure, homodimer.

The enzyme catalyses (6R)-5,10-methylene-5,6,7,8-tetrahydrofolate + NADP(+) = (6R)-5,10-methenyltetrahydrofolate + NADPH. It catalyses the reaction (6R)-5,10-methenyltetrahydrofolate + H2O = (6R)-10-formyltetrahydrofolate + H(+). It functions in the pathway one-carbon metabolism; tetrahydrofolate interconversion. Its function is as follows. Catalyzes the oxidation of 5,10-methylenetetrahydrofolate to 5,10-methenyltetrahydrofolate and then the hydrolysis of 5,10-methenyltetrahydrofolate to 10-formyltetrahydrofolate. This chain is Bifunctional protein FolD 2, found in Mesorhizobium japonicum (strain LMG 29417 / CECT 9101 / MAFF 303099) (Mesorhizobium loti (strain MAFF 303099)).